The chain runs to 278 residues: Large ribosomal subunit protein uL2 (278 aa).

The tract at residues 208–278 (AGRSRWMGKR…LIIRHRKGRK (71 aa)) is disordered. Over residues 209-219 (GRSRWMGKRPQ) the composition is skewed to basic residues. The segment covering 258–270 (KTRDSKKASEKLI) has biased composition (basic and acidic residues).

This sequence belongs to the universal ribosomal protein uL2 family. In terms of assembly, part of the 50S ribosomal subunit. Forms a bridge to the 30S subunit in the 70S ribosome.

Its function is as follows. One of the primary rRNA binding proteins. Required for association of the 30S and 50S subunits to form the 70S ribosome, for tRNA binding and peptide bond formation. It has been suggested to have peptidyltransferase activity; this is somewhat controversial. Makes several contacts with the 16S rRNA in the 70S ribosome. The sequence is that of Large ribosomal subunit protein uL2 from Lactobacillus delbrueckii subsp. bulgaricus (strain ATCC 11842 / DSM 20081 / BCRC 10696 / JCM 1002 / NBRC 13953 / NCIMB 11778 / NCTC 12712 / WDCM 00102 / Lb 14).